Here is a 132-residue protein sequence, read N- to C-terminus: Riboflavin kinase (132 aa).

13 to 18 (GLGHGS) lines the CDP pocket. Mg(2+) is bound by residues Thr-40 and Asn-42. Thr-98 and Glu-106 together coordinate FMN. Position 111–114 (111–114 (VYLR)) interacts with CDP.

It belongs to the archaeal riboflavin kinase family. Mg(2+) serves as cofactor.

The catalysed reaction is riboflavin + CTP = CDP + FMN + H(+). The protein operates within cofactor biosynthesis; FMN biosynthesis; FMN from riboflavin (CTP route): step 1/1. In terms of biological role, catalyzes the CTP-dependent phosphorylation of riboflavin (vitamin B2) to form flavin mononucleotide (FMN). This Aeropyrum pernix (strain ATCC 700893 / DSM 11879 / JCM 9820 / NBRC 100138 / K1) protein is Riboflavin kinase.